Here is a 322-residue protein sequence, read N- to C-terminus: Nodulation protein D 1 (322 aa).

The region spanning 6–63 (LDLNLLVALDALMTERKLTAAARSINLSQPAMSAAITRLRTYFRDELFTMNGRELVPT) is the HTH lysR-type domain. The segment at residues 23 to 42 (LTAAARSINLSQPAMSAAIT) is a DNA-binding region (H-T-H motif).

This sequence belongs to the LysR transcriptional regulatory family.

In terms of biological role, regulates the expression of the nod abcFE genes which encode other nodulation proteins. NodD is also a negative regulator of its own expression. Binds flavonoids as inducers. This chain is Nodulation protein D 1 (nodD1), found in Sinorhizobium fredii (strain NBRC 101917 / NGR234).